We begin with the raw amino-acid sequence, 795 residues long: Phenylalanine--tRNA ligase beta subunit (795 aa).

Positions 39–148 (AGTFNGVVVG…LDAPIGTDLR (110 aa)) constitute a tRNA-binding domain. A B5 domain is found at 401-476 (PKVNTVQLRR…RIYGYNSIPN (76 aa)). D454, D460, E463, and E464 together coordinate Mg(2+). The FDX-ACB domain maps to 701-794 (SKFPANRRDL…VKQRFNAELR (94 aa)).

Belongs to the phenylalanyl-tRNA synthetase beta subunit family. Type 1 subfamily. Tetramer of two alpha and two beta subunits. Requires Mg(2+) as cofactor.

The protein localises to the cytoplasm. The enzyme catalyses tRNA(Phe) + L-phenylalanine + ATP = L-phenylalanyl-tRNA(Phe) + AMP + diphosphate + H(+). The protein is Phenylalanine--tRNA ligase beta subunit of Haemophilus influenzae (strain 86-028NP).